Here is a 430-residue protein sequence, read N- to C-terminus: Histidine--tRNA ligase (430 aa).

It belongs to the class-II aminoacyl-tRNA synthetase family. In terms of assembly, homodimer.

The protein localises to the cytoplasm. The catalysed reaction is tRNA(His) + L-histidine + ATP = L-histidyl-tRNA(His) + AMP + diphosphate + H(+). The protein is Histidine--tRNA ligase of Chlorobaculum parvum (strain DSM 263 / NCIMB 8327) (Chlorobium vibrioforme subsp. thiosulfatophilum).